Reading from the N-terminus, the 319-residue chain is Transaldolase (319 aa).

The Schiff-base intermediate with substrate role is filled by Lys131.

This sequence belongs to the transaldolase family. Type 1 subfamily. As to quaternary structure, homodimer.

It localises to the cytoplasm. The enzyme catalyses D-sedoheptulose 7-phosphate + D-glyceraldehyde 3-phosphate = D-erythrose 4-phosphate + beta-D-fructose 6-phosphate. It functions in the pathway carbohydrate degradation; pentose phosphate pathway; D-glyceraldehyde 3-phosphate and beta-D-fructose 6-phosphate from D-ribose 5-phosphate and D-xylulose 5-phosphate (non-oxidative stage): step 2/3. Transaldolase is important for the balance of metabolites in the pentose-phosphate pathway. The sequence is that of Transaldolase from Wigglesworthia glossinidia brevipalpis.